The following is a 321-amino-acid chain: Phospho-N-acetylmuramoyl-pentapeptide-transferase (321 aa).

10 helical membrane passes run 6–26, 54–74, 77–97, 117–137, 143–163, 175–195, 200–220, 226–246, 251–271, and 301–321; these read IFIP…LFIG, MGGV…GLFF, FTPS…LGYL, LIGQ…EGFS, FGVA…FWLV, IDGL…IIAW, FDVV…FPYN, IFMG…ISII, WTLL…ILQV, and IDFV…WILF.

Belongs to the glycosyltransferase 4 family. MraY subfamily. It depends on Mg(2+) as a cofactor.

Its subcellular location is the cell membrane. The enzyme catalyses UDP-N-acetyl-alpha-D-muramoyl-L-alanyl-gamma-D-glutamyl-L-lysyl-D-alanyl-D-alanine + di-trans,octa-cis-undecaprenyl phosphate = Mur2Ac(oyl-L-Ala-gamma-D-Glu-L-Lys-D-Ala-D-Ala)-di-trans,octa-cis-undecaprenyl diphosphate + UMP. Its pathway is cell wall biogenesis; peptidoglycan biosynthesis. Its function is as follows. Catalyzes the initial step of the lipid cycle reactions in the biosynthesis of the cell wall peptidoglycan: transfers peptidoglycan precursor phospho-MurNAc-pentapeptide from UDP-MurNAc-pentapeptide onto the lipid carrier undecaprenyl phosphate, yielding undecaprenyl-pyrophosphoryl-MurNAc-pentapeptide, known as lipid I. The protein is Phospho-N-acetylmuramoyl-pentapeptide-transferase of Enterococcus faecalis (strain ATCC 700802 / V583).